Reading from the N-terminus, the 233-residue chain is Thymidylate kinase (233 aa).

10 to 17 (GVDGVGKT) contacts ATP.

This sequence belongs to the thymidylate kinase family.

The catalysed reaction is dTMP + ATP = dTDP + ADP. Its function is as follows. Phosphorylation of dTMP to form dTDP in both de novo and salvage pathways of dTTP synthesis. This Bifidobacterium longum subsp. infantis (strain ATCC 15697 / DSM 20088 / JCM 1222 / NCTC 11817 / S12) protein is Thymidylate kinase.